A 485-amino-acid polypeptide reads, in one-letter code: Trk system potassium uptake protein TrkG (485 aa).

The Cytoplasmic portion of the chain corresponds to 1–5; sequence MNTSH. Residues 6–32 form a helical membrane-spanning segment; the sequence is VRVVTHMCGFLVWLYSLSMLPPMVVAL. Over 33-38 the chain is Periplasmic; it reads FYKEKS. A helical membrane pass occupies residues 39–60; it reads LFVFFITFVIFFCIGGGAWYTT. At 61–68 the chain is on the cytoplasmic side; sequence KKSGIQLR. Residues 69–93 form a helical membrane-spanning segment; it reads TRDGFIIIVMFWILFSVISAFPLWI. Residues 101 to 112 constitute an intramembrane region (helical; Pore-forming); that stretch reads FIDALFEGVSGI. Residues 113–118 lie within the membrane without spanning it; it reads TTTGAT. Residues 113–118 form a selectivity filter part 1 region; it reads TTTGAT. The K(+) site is built by Thr-114 and Thr-115. At 119–127 the chain is on the periplasmic side; it reads VIDDVSSLP. A helical transmembrane segment spans residues 128–153; that stretch reads RAYLYYRSQLNFIGGLGVIVLAVAVL. At 154-180 the chain is on the cytoplasmic side; sequence PLLGIGGAKLYQSEMPGPFKDDKLTPR. Residues 181-205 traverse the membrane as a helical segment; that stretch reads LADTSRTLWITYSLLGIACIVCYRL. At 206–208 the chain is on the periplasmic side; that stretch reads AGM. Pro-209 is an intramembrane region. An intramembrane region (helical; Pore-forming) is located at residues 210–221; it reads LFDAICHGISTV. An intramembrane segment occupies 222–227; the sequence is SLGGFS. Positions 222 to 227 are selectivity filter part 2; that stretch reads SLGGFS. Leu-223 and Gly-224 together coordinate K(+). Residues 228-237 are Periplasmic-facing; the sequence is THSESIGYFN. The helical intramembrane region spans 238-253; it reads NYLVELVAGSFSLLSA. The chain crosses the membrane as a helical span at residues 277-297; sequence LRFFLLIALGVIIVTSFQVWH. An intramembrane region (helical; Pore-forming) is located at residues 303–318; sequence LHGSFIHSFFLASSML. The stretch at 319 to 324 is an intramembrane region; that stretch reads TDNGLA. Positions 319-324 are selectivity filter part 3; the sequence is TDNGLA. K(+)-binding residues include Asp-320 and Asn-321. The Periplasmic segment spans residues 325–332; sequence TQDYASWP. The helical intramembrane region spans 333 to 344; sequence THTIVFLLLSSF. The segment at residues 345–357 is an intramembrane region (note=Loop between two helices); that stretch reads FGGCIGSTCGGIK. Residues 392-419 form a helical membrane-spanning segment; that stretch reads TDRVMRSVWSFFFLYTLFTVFFILVLNG. Residues 420–421 are Periplasmic-facing; sequence MG. Residues 422 to 423 lie within the membrane without spanning it; sequence YD. The helical; Pore-forming intramembrane region spans 424 to 434; the sequence is FLTSFATVAAC. Residues 435-441 lie within the membrane without spanning it; it reads INNMGLG. The selectivity filter part 4 stretch occupies residues 436 to 441; sequence NNMGLG. 2 residues coordinate K(+): Asn-437 and Met-438. Topologically, residues 442 to 453 are periplasmic; the sequence is FGATASSFGVLN. The helical intramembrane region spans 454–465; it reads DIAKCLMCIAMI.

The protein belongs to the TrkH potassium transport family.

The protein localises to the cell inner membrane. Its function is as follows. Low-affinity potassium transport system. Interacts with Trk system potassium uptake protein TrkA. Requires TrkE (sapD) for maximal transport activity, low activity is seen in its absence; no further stimulation is seen with SapF. Transport in the absence of SapD is dependent on a high membrane potential and a high cytoplasmic ATP concentration, suggesting this protein may be able to interact with other ATP-binding proteins. Can transport potassium and rubidium. The chain is Trk system potassium uptake protein TrkG (trkG) from Escherichia coli (strain K12).